Consider the following 411-residue polypeptide: Lycopene beta cyclase (411 aa).

4–32 serves as a coordination point for NAD(+); that stretch reads ALVIGSGPAGLAIAAELAQRGLKVQGLSP.

The protein belongs to the lycopene cyclase family. Requires FAD as cofactor.

The enzyme catalyses a carotenoid psi-end group = a carotenoid beta-end derivative. It catalyses the reaction all-trans-lycopene = gamma-carotene. It carries out the reaction gamma-carotene = all-trans-beta-carotene. The catalysed reaction is all-trans-neurosporene = beta-zeacarotene. Its pathway is carotenoid biosynthesis; beta-carotene biosynthesis. It functions in the pathway carotenoid biosynthesis; beta-zeacarotene biosynthesis. Its activity is regulated as follows. Inhibited by the bleaching herbicide 2-(4-methylphenoxy)triethylamine hydrochloride (MPTA). In terms of biological role, catalyzes the double cyclization reaction which converts lycopene to beta-carotene. It also converts neurosporene to the monocyclic beta-zeacarotene but does not cyclize zeta-carotene. This chain is Lycopene beta cyclase, found in Synechococcus elongatus (strain ATCC 33912 / PCC 7942 / FACHB-805) (Anacystis nidulans R2).